The chain runs to 894 residues: Alpha-actinin-2 (894 aa).

Residues Met1 to His254 form an actin-binding region. 2 consecutive Calponin-homology (CH) domains span residues Lys38–Ala142 and Thr151–Ala257. Thr237 is subject to Phosphothreonine. Spectrin repeat units lie at residues Arg281 to Asn391, His401 to Arg506, Gln516 to Glu627, and Arg637 to Thr740. EF-hand domains are found at residues Glu753–Asp788 and Leu789–Asp824. 6 residues coordinate Ca(2+): Asp766, Asn770, Asp777, Asp802, Asn804, and Thr808.

Belongs to the alpha-actinin family. In terms of assembly, homodimer; antiparallel. Also forms heterodimers with ACTN3. Interacts with ADAM12, MYOZ1, MYOZ2 and MYOZ3. Interacts via its C-terminal region with the LDB3 PDZ domain. Interacts with XIRP2. Interacts with DST (via N-terminus). Interacts with PARVB. Interacts with SYNPO2. In terms of processing, ubiquitinated by FBXL22, leading to proteasomal degradation.

The protein localises to the cytoplasm. It localises to the myofibril. The protein resides in the sarcomere. It is found in the z line. Its function is as follows. F-actin cross-linking protein which is thought to anchor actin to a variety of intracellular structures. This is a bundling protein. This is Alpha-actinin-2 (Actn2) from Mus musculus (Mouse).